We begin with the raw amino-acid sequence, 214 residues long: Ribosomal RNA small subunit methyltransferase G (214 aa).

Residues Gly81, Met86, 132-133 (AE), and Arg147 each bind S-adenosyl-L-methionine.

The protein belongs to the methyltransferase superfamily. RNA methyltransferase RsmG family.

It localises to the cytoplasm. The enzyme catalyses guanosine(527) in 16S rRNA + S-adenosyl-L-methionine = N(7)-methylguanosine(527) in 16S rRNA + S-adenosyl-L-homocysteine. Functionally, specifically methylates the N7 position of guanine in position 527 of 16S rRNA. This chain is Ribosomal RNA small subunit methyltransferase G, found in Pseudomonas syringae pv. syringae (strain B728a).